The chain runs to 621 residues: MVKKELEMYNLYTFQIDLDKKLLFEKADNQQNYSKIRARYFKNSARNQQAVFLNKNLIKNTFNKALLNFSDFLSGSGVESIFKQVIDDQPEVLNYLKQVKKEDSCDGHSEASQLVFNVVINPKNTLANFFEELTIYLHFNEENNTVVGSFSLKWNIKRADLFSETKNIAINNLIHTFCKNNLNEVSFIQIIKCFAKTLINKQGQIVLESCAFKQKWQNIVEQKYPFSTIHKNLKIVNSDFFDAFFVILLLICHLNNNLLWLCEKTEHFEWKLNSKISNFKEDNTEVYLSKMLLFLKDWYFENQAVTNEDIEKVDEVEDIGKLVEKYSANQPQKLSSNSTVYVFEPDKKQCFLKNDDFFNTNEAKLLFLITMQPNVFGLDDTAIANDLNLREIGDFFKEIDFTDSDVLNDFQQQKETLLVRRTFNQLLFMNSNTDVLSIVNNKFKSAIHNIVWTITYSKAIMLKAFDYSKIFEQNRTNDPSLLRSNLNSINRLRYLSEYFRTASVKYDQLYTKVKEYMQLDQFLVDMINQVNHEDEIFGKYKERVYLSLGIVTAVVFGIIEFFNCVWTVLTVSQQTAEKSLADPRNTVIIGIGTILVLTLLITILTFMTRRLYLFEFNKKHK.

3 consecutive transmembrane segments (helical) span residues 240–260 (FFDA…NLLW), 548–568 (LGIV…VWTV), and 587–607 (VIIG…LTFM).

Its subcellular location is the cell membrane. This is an uncharacterized protein from Mycoplasma pneumoniae (strain ATCC 29342 / M129 / Subtype 1) (Mycoplasmoides pneumoniae).